The chain runs to 743 residues: Dynein regulatory complex protein 1 homolog (743 aa).

Acidic residues-rich tracts occupy residues 1 to 10 and 19 to 28; these read MDDNEDELEE and SVEEEEEVEP. Residues 1–34 are disordered; the sequence is MDDNEDELEEHQELVSDGSVEEEEEVEPDLGPVD. Coiled-coil stretches lie at residues 175–332 and 395–416; these read DQIE…VLMN and KLHSNINDMESKAHQARLNNRE. Residues 599–620 are disordered; the sequence is NRLQGAAGGQPDEKEHRSTGDT. A coiled-coil region spans residues 715–742; that stretch reads KMRVQYDAEVVFLRRQNEELRHLLQKFT.

It belongs to the DRC1 family.

In Drosophila melanogaster (Fruit fly), this protein is Dynein regulatory complex protein 1 homolog.